The sequence spans 181 residues: Translation initiation factor IF-3 (181 aa).

The protein belongs to the IF-3 family. As to quaternary structure, monomer.

Its subcellular location is the cytoplasm. In terms of biological role, IF-3 binds to the 30S ribosomal subunit and shifts the equilibrium between 70S ribosomes and their 50S and 30S subunits in favor of the free subunits, thus enhancing the availability of 30S subunits on which protein synthesis initiation begins. This is Translation initiation factor IF-3 from Pseudoalteromonas translucida (strain TAC 125).